The following is a 106-amino-acid chain: Met repressor (106 aa).

Belongs to the MetJ family. In terms of assembly, homodimer.

It localises to the cytoplasm. In terms of biological role, this regulatory protein, when combined with SAM (S-adenosylmethionine) represses the expression of the methionine regulon and of enzymes involved in SAM synthesis. In Vibrio campbellii (strain ATCC BAA-1116), this protein is Met repressor.